The following is a 69-amino-acid chain: DNA gyrase inhibitor YacG (69 aa).

Zn(2+)-binding residues include C7, C10, C26, and C30.

The protein belongs to the DNA gyrase inhibitor YacG family. As to quaternary structure, interacts with GyrB. Requires Zn(2+) as cofactor.

In terms of biological role, inhibits all the catalytic activities of DNA gyrase by preventing its interaction with DNA. Acts by binding directly to the C-terminal domain of GyrB, which probably disrupts DNA binding by the gyrase. The protein is DNA gyrase inhibitor YacG of Shewanella sp. (strain W3-18-1).